The following is a 143-amino-acid chain: Transcriptional regulator MraZ (143 aa).

SpoVT-AbrB domains are found at residues 5 to 47 (EYQH…PQDE) and 76 to 119 (AAEL…STEK).

This sequence belongs to the MraZ family. As to quaternary structure, forms oligomers.

The protein resides in the cytoplasm. It is found in the nucleoid. The sequence is that of Transcriptional regulator MraZ from Syntrophomonas wolfei subsp. wolfei (strain DSM 2245B / Goettingen).